The chain runs to 902 residues: Zinc finger CCCH-type antiviral protein 1 (902 aa).

An N-acetylalanine modification is found at A2. Residues 2–254 (ADPEVCCFIT…ARSKSRDRFF (253 aa)) form an N-terminal domain region. The Nuclear localization signal motif lies at 69 to 76 (RARVCRRK). 4 consecutive C3H1-type zinc fingers follow at residues 73-86 (CRRK…DNLH), 88-110 (CKLN…KYSH), 150-172 (CKSY…SRLH), and 169-193 (SRLH…SHNL). The tract at residues 221-251 (SKHMQKNPPGPRAPSSHRRNMAYRARSKSRD) is disordered. Residues 224 to 254 (MQKNPPGPRAPSSHRRNMAYRARSKSRDRFF) form a binding to EXOSC5 region. Over residues 235–247 (SSHRRNMAYRARS) the composition is skewed to basic residues. Phosphoserine; by GSK3-beta is present on residues S257, S263, S267, and S271. Residues 265–278 (SASAERSCTPSPDQ) are compositionally biased toward polar residues. Disordered stretches follow at residues 265–287 (SASA…SLED) and 299–373 (YLGS…GARR). Phosphothreonine is present on T273. Phosphoserine is present on residues S275 and S284. The Nuclear export signal signature appears at 285–292 (LEDAPVDD). S302, S327, S335, S355, S378, and S387 each carry phosphoserine. 2 stretches are compositionally biased toward polar residues: residues 310–336 (SGSS…NGSQ) and 344–369 (PGST…TNDQ). T393 carries the phosphothreonine modification. Phosphoserine is present on residues S407, S469, S492, and S494. The segment at 445–481 (LNYKSTSSGHREISSPRIQDAGPASRDVQATGRIADD) is disordered. Position 554 is a phosphothreonine (T554). 2 positions are modified to phosphoserine: Y572 and S590. Residues 594 to 681 (SVTKPANSVF…ASKTQKDVIR (88 aa)) enclose the WWE domain. The region spanning 716 to 902 (PQEDFCFLSS…YTEDKACVIS (187 aa)) is the PARP catalytic domain.

Belongs to the ARTD/PARP family. As to quaternary structure, homodimer or homooligomer. Homooligomerization is essential for its antiviral activity. Interacts with EXOSC5. Interacts (via N-terminal domain) with DDX17 in an RNA-independent manner. Interacts with EXOSC3, EXOSC7, DCP2 and DCP1A. Interacts with PARN in an RNA-independent manner. Interacts with XRN1 in an RNA-dependent manner. Isoform 2 interacts (via zinc-fingers) with RIGI in an RNA-dependent manner. Interacts (via N-terminal domain) with DHX30 (via N-terminus) in an RNA-independent manner. Post-translationally, phosphorylation at Ser-275 is essential for sequential phosphorylation of Ser-271, Ser-267, Ser-263 and Ser-257 by GSK3-beta. Phosphorylation by GSK3-beta enhances its antiviral activity.

The protein resides in the cytoplasm. It is found in the nucleus. Its function is as follows. Antiviral protein which inhibits the replication of viruses by recruiting the cellular RNA degradation machineries to degrade the viral mRNAs. Binds to a ZAP-responsive element (ZRE) present in the target viral mRNA, recruits cellular poly(A)-specific ribonuclease PARN to remove the poly(A) tail, and the 3'-5' exoribonuclease complex exosome to degrade the RNA body from the 3'-end. It also recruits the decapping complex DCP1-DCP2 through RNA helicase p72 (DDX17) to remove the cap structure of the viral mRNA to initiate its degradation from the 5'-end. Its target viruses belong to families which include retroviridae: human immunodeficiency virus type 1 (HIV-1), moloney and murine leukemia virus (MoMLV) and xenotropic MuLV-related virus (XMRV), filoviridae: ebola virus (EBOV) and marburg virus (MARV), togaviridae: sindbis virus (SINV) and Ross river virus (RRV). Specifically targets the multiply spliced but not unspliced or singly spliced HIV-1 mRNAs for degradation. Isoform 1 is a more potent viral inhibitor than isoform 2. Isoform 2 acts as a positive regulator of RIGI signaling resulting in activation of the downstream effector IRF3 leading to the expression of type I IFNs and IFN stimulated genes (ISGs). The chain is Zinc finger CCCH-type antiviral protein 1 from Homo sapiens (Human).